Consider the following 273-residue polypeptide: Urease accessory protein UreD (273 aa).

Residues 1-29 are disordered; sequence MLMRTATPLDQPRAIGSARVSSKRVNGGS.

Belongs to the UreD family. As to quaternary structure, ureD, UreF and UreG form a complex that acts as a GTP-hydrolysis-dependent molecular chaperone, activating the urease apoprotein by helping to assemble the nickel containing metallocenter of UreC. The UreE protein probably delivers the nickel.

The protein resides in the cytoplasm. Its function is as follows. Required for maturation of urease via the functional incorporation of the urease nickel metallocenter. This Roseobacter denitrificans (strain ATCC 33942 / OCh 114) (Erythrobacter sp. (strain OCh 114)) protein is Urease accessory protein UreD.